The following is a 591-amino-acid chain: Paxillin (591 aa).

The residue at position 1 (Met-1) is an N-acetylmethionine. Positions 3–15 (DLDALLADLESTT) match the LD motif 1 motif. A disordered region spans residues 17–139 (HISKRPVFLS…SPTVMSSSLG (123 aa)). Residue Tyr-31 is modified to Phosphotyrosine; by PTK6. Over residues 45–54 (VPPPVPPPPS) the composition is skewed to pro residues. A Phosphoserine modification is found at Ser-83. A Phosphotyrosine modification is found at Tyr-88. Residues 89-99 (SSSAKNSSASN) show a composition bias toward low complexity. The residue at position 106 (Ser-106) is a Phosphoserine. Tyr-118 is modified (phosphotyrosine; by PTK6). Ser-119, Ser-126, and Ser-130 each carry phosphoserine. Positions 121–137 (PNKQKSAEPSPTVMSSS) are enriched in polar residues. Thr-132 carries the phosphothreonine modification. Residues Ser-137, Ser-140, and Ser-143 each carry the phosphoserine modification. The short motif at 144-156 (ELDRLLLELNAVQ) is the LD motif 2 element. Residues 156–261 (QHSPPGFPAD…QQQTRISASS (106 aa)) form a disordered region. Phosphotyrosine is present on Tyr-181. An LD motif 3 motif is present at residues 216–228 (SVESLLDELESSV). Residue Ser-230 is modified to Phosphoserine. Positions 236 to 261 (TVNQGEMSSPQRVTSSQQQTRISASS) are enriched in polar residues. A Phosphoserine; by CDK5 modification is found at Ser-244. Phosphoserine occurs at positions 250, 258, 261, 272, 303, 322, 332, and 340. A required for binding to PARVA and ILK region spans residues 262 to 315 (ATRELDELMASLSDFKMQGLEQRVDGERPWAAGWPPSSRQSSPEGQDEGGFMAQ). The LD motif 4 motif lies at 265–276 (ELDELMASLSDF). The disordered stretch occupies residues 289–338 (RPWAAGWPPSSRQSSPEGQDEGGFMAQGKTGSSSPPGGLSKPGSQLDSML). Residues 315–334 (QGKTGSSSPPGGLSKPGSQL) are compositionally biased toward low complexity. The LD motif 5 signature appears at 333–345 (QLDSMLGSLQSDL). LIM zinc-binding domains are found at residues 356–415 (GVCG…LFSP), 416–473 (RCYY…DMFA), 474–533 (PKCG…RRGS), and 534–591 (LCSG…KLFC). Phosphoserine is present on Ser-533.

Belongs to the paxillin family. As to quaternary structure, interacts in vitro with VCL/vinculin as well as to the SH3 domain of SRC and, when tyrosine phosphorylated, to the SH2 domain of CRK. Interacts with GIT1. Interacts with NUDT16L1/SDOS. Interacts with PTK2/FAK1. Interacts with PTK2B/PYK2. Interacts with ASAP2. Interacts with unphosphorylated ITGA4. Interacts with RNF5. Interacts with PDCD10. Interacts with NEK3, the interaction is prolactin-dependent. Interacts with PTK6. Interacts with TGFB1I1. Interacts with SORBS1. Interacts with PARVB. Interacts (via LD motif 4) with PARVA/PARVIN. Interacts (via LD motif 4) with ILK. Interacts (via cytoplasmic domain) with CEACAM1; the interaction is phosphotyrosyl-dependent. Interacts with LIMA1; this complex stabilizes actin dynamics. Interacts with CD36 (via C-terminus). Interacts with TRIM15. Interacts with PAK4; PAK4 acts as a scaffold to suppport PAXI phosphorylation at Ser-272. Post-translationally, phosphorylated by MAPK1/ERK2. Phosphorylated on tyrosine residues during integrin-mediated cell adhesion, embryonic development, fibroblast transformation and following stimulation of cells by mitogens. Phosphorylation at Ser-244 by CDK5 reduces its interaction with PTK2/FAK1 in matrix-cell focal adhesions (MCFA) during oligodendrocytes (OLs) differentiation. Phosphorylation at Tyr-31 and Tyr-118 by PTK6 promote the activation of RAC1 via CRK/CrKII, thereby promoting migration and invasion. Phosphorylation at Ser-250 by SLK is required for PXN redistribution and cell motility. Phosphorylation at Ser-272 promotes focal adhesion disassembly during cell migration.

The protein localises to the cytoplasm. It is found in the cytoskeleton. It localises to the cell junction. The protein resides in the focal adhesion. Its subcellular location is the cell cortex. Its function is as follows. Cytoskeletal protein involved in actin-membrane attachment at sites of cell adhesion to the extracellular matrix (focal adhesion). Recruits other proteins such as TRIM15 to focal adhesion. The polypeptide is Paxillin (Mus musculus (Mouse)).